The primary structure comprises 747 residues: Polyribonucleotide nucleotidyltransferase (747 aa).

Positions 502 and 508 each coordinate Mg(2+). The region spanning Pro569–Ile628 is the KH domain. The S1 motif domain maps to Gly638–Lys712. The segment at Ser718–Arg747 is disordered.

It belongs to the polyribonucleotide nucleotidyltransferase family. Mg(2+) is required as a cofactor.

The protein localises to the cytoplasm. The catalysed reaction is RNA(n+1) + phosphate = RNA(n) + a ribonucleoside 5'-diphosphate. Its function is as follows. Involved in mRNA degradation. Catalyzes the phosphorolysis of single-stranded polyribonucleotides processively in the 3'- to 5'-direction. This Moorella thermoacetica (strain ATCC 39073 / JCM 9320) protein is Polyribonucleotide nucleotidyltransferase.